A 216-amino-acid chain; its full sequence is Peroxiredoxin (216 aa).

A Thioredoxin domain is found at 2–158 (IVIGEKFPEV…ILRLVKALKI (157 aa)). The Cysteine sulfenic acid (-SOH) intermediate role is filled by C46. R121 provides a ligand contact to substrate. C205 and C211 are oxidised to a cystine.

It belongs to the peroxiredoxin family. Prx6 subfamily. Homodecamer. Pentamer of dimers that assemble into a ring structure.

Its subcellular location is the cytoplasm. The enzyme catalyses a hydroperoxide + [thioredoxin]-dithiol = an alcohol + [thioredoxin]-disulfide + H2O. In terms of biological role, thiol-specific peroxidase that catalyzes the reduction of hydrogen peroxide and organic hydroperoxides to water and alcohols, respectively. Plays a role in cell protection against oxidative stress by detoxifying peroxides. This Pyrococcus furiosus (strain ATCC 43587 / DSM 3638 / JCM 8422 / Vc1) protein is Peroxiredoxin.